The chain runs to 565 residues: NAD-dependent malic enzyme (565 aa).

Catalysis depends on Tyr-104, which acts as the Proton donor. Arg-157 contributes to the NAD(+) binding site. Lys-175 acts as the Proton acceptor in catalysis. Residues Glu-246, Asp-247, and Asp-270 each coordinate a divalent metal cation. NAD(+)-binding residues include Asp-270 and Asn-418.

It belongs to the malic enzymes family. In terms of assembly, homotetramer. Mg(2+) is required as a cofactor. Requires Mn(2+) as cofactor.

The enzyme catalyses (S)-malate + NAD(+) = pyruvate + CO2 + NADH. It carries out the reaction oxaloacetate + H(+) = pyruvate + CO2. In Pectobacterium atrosepticum (strain SCRI 1043 / ATCC BAA-672) (Erwinia carotovora subsp. atroseptica), this protein is NAD-dependent malic enzyme.